The primary structure comprises 619 residues: Phosphomethylpyrimidine synthase (619 aa).

Positions 93–104 (IKPEDNGLKGPD) are enriched in basic and acidic residues. Residues 93-114 (IKPEDNGLKGPDRSGGVTPFPN) form a disordered region. Substrate is bound by residues asparagine 217, methionine 246, tyrosine 275, histidine 311, 331–333 (SRG), 372–375 (DGLR), and glutamate 411. Position 415 (histidine 415) interacts with Zn(2+). Tyrosine 438 is a substrate binding site. Histidine 479 provides a ligand contact to Zn(2+). Positions 559, 562, and 567 each coordinate [4Fe-4S] cluster.

It belongs to the ThiC family. In terms of assembly, homodimer. The cofactor is [4Fe-4S] cluster.

It carries out the reaction 5-amino-1-(5-phospho-beta-D-ribosyl)imidazole + S-adenosyl-L-methionine = 4-amino-2-methyl-5-(phosphooxymethyl)pyrimidine + CO + 5'-deoxyadenosine + formate + L-methionine + 3 H(+). It participates in cofactor biosynthesis; thiamine diphosphate biosynthesis. Catalyzes the synthesis of the hydroxymethylpyrimidine phosphate (HMP-P) moiety of thiamine from aminoimidazole ribotide (AIR) in a radical S-adenosyl-L-methionine (SAM)-dependent reaction. The chain is Phosphomethylpyrimidine synthase from Rhizorhabdus wittichii (strain DSM 6014 / CCUG 31198 / JCM 15750 / NBRC 105917 / EY 4224 / RW1) (Sphingomonas wittichii).